A 206-amino-acid polypeptide reads, in one-letter code: Protein MIS12 homolog (206 aa).

Residues 102 to 206 adopt a coiled-coil conformation; it reads DKCQETNPFS…EKESRRLETQ (105 aa).

It belongs to the mis12 family. In terms of assembly, component of the MIS12 complex composed of MIS12, DSN1, NSL1 and PMF1. Also interacts with KNL1, CBX3, CBX5, NDC80 and ZWINT.

The protein resides in the chromosome. It localises to the centromere. The protein localises to the kinetochore. Part of the MIS12 complex which is required for normal chromosome alignment and segregation and for kinetochore formation during mitosis. Essential for proper kinetochore microtubule attachments. In Mus musculus (Mouse), this protein is Protein MIS12 homolog.